The primary structure comprises 1076 residues: DNA-directed RNA polymerase subunit beta (1076 aa).

The protein belongs to the RNA polymerase beta chain family. In plastids the minimal PEP RNA polymerase catalytic core is composed of four subunits: alpha, beta, beta', and beta''. When a (nuclear-encoded) sigma factor is associated with the core the holoenzyme is formed, which can initiate transcription.

Its subcellular location is the plastid. It is found in the chloroplast. The enzyme catalyses RNA(n) + a ribonucleoside 5'-triphosphate = RNA(n+1) + diphosphate. In terms of biological role, DNA-dependent RNA polymerase catalyzes the transcription of DNA into RNA using the four ribonucleoside triphosphates as substrates. The protein is DNA-directed RNA polymerase subunit beta of Hordeum vulgare (Barley).